The sequence spans 652 residues: DNA ligase (652 aa).

NAD(+) is bound by residues 29–33 (DSEYD), 78–79 (SL), and E107. The N6-AMP-lysine intermediate role is filled by K109. Residues R130, E164, K278, and K302 each coordinate NAD(+). Positions 395, 398, 413, and 418 each coordinate Zn(2+). The BRCT domain maps to 577–652 (DRQAELFGLT…IEDEDWLLNL (76 aa)).

This sequence belongs to the NAD-dependent DNA ligase family. LigA subfamily. Requires Mg(2+) as cofactor. Mn(2+) is required as a cofactor.

The enzyme catalyses NAD(+) + (deoxyribonucleotide)n-3'-hydroxyl + 5'-phospho-(deoxyribonucleotide)m = (deoxyribonucleotide)n+m + AMP + beta-nicotinamide D-nucleotide.. Its function is as follows. DNA ligase that catalyzes the formation of phosphodiester linkages between 5'-phosphoryl and 3'-hydroxyl groups in double-stranded DNA using NAD as a coenzyme and as the energy source for the reaction. It is essential for DNA replication and repair of damaged DNA. This Streptococcus equi subsp. zooepidemicus (strain MGCS10565) protein is DNA ligase.